We begin with the raw amino-acid sequence, 465 residues long: tRNA modification GTPase MnmE (465 aa).

Arg30, Glu92, and Arg132 together coordinate (6S)-5-formyl-5,6,7,8-tetrahydrofolate. A TrmE-type G domain is found at 227 to 388; it reads GLQVALVGRP…LIEAVLKTCG (162 aa). Residue Asn237 coordinates K(+). Residues 237-242, 256-262, 281-284, and 342-345 contribute to the GTP site; these read NVGKSS, TDLPGTT, DTAG, and NKAD. Position 241 (Ser241) interacts with Mg(2+). 3 residues coordinate K(+): Thr256, Leu258, and Thr261. Thr262 lines the Mg(2+) pocket. Residue Lys465 coordinates (6S)-5-formyl-5,6,7,8-tetrahydrofolate.

The protein belongs to the TRAFAC class TrmE-Era-EngA-EngB-Septin-like GTPase superfamily. TrmE GTPase family. In terms of assembly, homodimer. Heterotetramer of two MnmE and two MnmG subunits. K(+) serves as cofactor.

The protein resides in the cytoplasm. Exhibits a very high intrinsic GTPase hydrolysis rate. Involved in the addition of a carboxymethylaminomethyl (cmnm) group at the wobble position (U34) of certain tRNAs, forming tRNA-cmnm(5)s(2)U34. This chain is tRNA modification GTPase MnmE, found in Prochlorococcus marinus (strain MIT 9303).